The chain runs to 169 residues: Cell division protein B3 (169 aa).

In terms of biological role, part of a cell division machinery. May fulfill a coordination function between the Cdv proteins during cell division. This is Cell division protein B3 from Sulfolobus acidocaldarius (strain ATCC 33909 / DSM 639 / JCM 8929 / NBRC 15157 / NCIMB 11770).